The following is a 103-amino-acid chain: Small ribosomal subunit protein uS14c (103 aa).

The tract at residues 26–56 (SSKKKIRSKVSPLSLSEKTKMQEKLQSLPRN) is disordered.

The protein belongs to the universal ribosomal protein uS14 family. In terms of assembly, part of the 30S ribosomal subunit.

Its subcellular location is the plastid. It is found in the chloroplast. In terms of biological role, binds 16S rRNA, required for the assembly of 30S particles. The chain is Small ribosomal subunit protein uS14c from Saccharum officinarum (Sugarcane).